We begin with the raw amino-acid sequence, 501 residues long: ATP synthase subunit alpha (501 aa).

Residue G170 to S177 participates in ATP binding.

The protein belongs to the ATPase alpha/beta chains family. As to quaternary structure, F-type ATPases have 2 components, CF(1) - the catalytic core - and CF(0) - the membrane proton channel. CF(1) has five subunits: alpha(3), beta(3), gamma(1), delta(1), epsilon(1). CF(0) has three main subunits: a(1), b(2) and c(9-12). The alpha and beta chains form an alternating ring which encloses part of the gamma chain. CF(1) is attached to CF(0) by a central stalk formed by the gamma and epsilon chains, while a peripheral stalk is formed by the delta and b chains.

The protein localises to the cell membrane. It carries out the reaction ATP + H2O + 4 H(+)(in) = ADP + phosphate + 5 H(+)(out). Produces ATP from ADP in the presence of a proton gradient across the membrane. The alpha chain is a regulatory subunit. The polypeptide is ATP synthase subunit alpha (Acholeplasma laidlawii (strain PG-8A)).